Reading from the N-terminus, the 522-residue chain is Probable cytosolic Fe-S cluster assembly factor narfl (522 aa).

The [4Fe-4S] cluster site is built by Cys-26, Cys-73, Cys-76, Cys-79, Cys-205, Cys-281, Cys-439, and Cys-443.

This sequence belongs to the NARF family.

Functionally, component of the cytosolic iron-sulfur (Fe/S) protein assembly machinery. Required for maturation of extramitochondrial Fe/S proteins. In Dictyostelium discoideum (Social amoeba), this protein is Probable cytosolic Fe-S cluster assembly factor narfl (narfl).